Reading from the N-terminus, the 933-residue chain is Phosphoenolpyruvate carboxylase (933 aa).

Catalysis depends on residues His-164 and Lys-595.

Belongs to the PEPCase type 1 family. The cofactor is Mg(2+).

The catalysed reaction is oxaloacetate + phosphate = phosphoenolpyruvate + hydrogencarbonate. In terms of biological role, forms oxaloacetate, a four-carbon dicarboxylic acid source for the tricarboxylic acid cycle. This Rhodopseudomonas palustris (strain BisB5) protein is Phosphoenolpyruvate carboxylase.